The sequence spans 655 residues: A-type voltage-gated potassium channel KCND3 (655 aa).

Residues 1–182 (MAAGVAAWLP…FENPHTSTLA (182 aa)) lie on the Cytoplasmic side of the membrane. Residues 6-21 (AAWLPFARAAAIGWMP) are interaction with KCNIP1 and KCNIP2. The segment at 70-78 (EKEFFFNED) is interaction with KCNIP1. Positions 104, 110, 131, and 132 each coordinate Zn(2+). Position 153 is a phosphoserine (Ser-153). Residues 183–204 (LVFYYVTGFFIAVSVITNVVET) form a helical membrane-spanning segment. The Extracellular segment spans residues 205–223 (VPCGTVPGSKELPCGERYS). Residues 224–246 (VAFFCLDTACVMIFTVEYLLRLF) form a helical membrane-spanning segment. The Cytoplasmic portion of the chain corresponds to 247–253 (AAPSRYR). The helical transmembrane segment at 254-277 (FIRSVMSIIDVVAIMPYYIGLVMT) threads the bilayer. Residues 278–283 (NNEDVS) lie on the Extracellular side of the membrane. Residues 284-306 (GAFVTLRVFRVFRIFKFSRHSQG) form a helical; Voltage-sensor membrane-spanning segment. Residues 307 to 318 (LRILGYTLKSCA) lie on the Cytoplasmic side of the membrane. The helical transmembrane segment at 319 to 343 (SELGFLLFSLTMAIIIFATVMFYAE) threads the bilayer. The Extracellular portion of the chain corresponds to 344 to 352 (KGSSASKFT). Positions 353–366 (SIPASFWYTIVTMT) form an intramembrane region, helical. Residues Thr-367, Leu-368, Gly-369, and Tyr-370 each contribute to the K(+) site. The Selectivity filter motif lies at 367-372 (TLGYGD). Residues 367–374 (TLGYGDMV) lie within the membrane without spanning it. Residues 378–400 (IAGKIFGSICSLSGVLVIALPVP) traverse the membrane as a helical segment. Over 401–655 (VIVSNFSRIY…TSNVVKVSAL (255 aa)) the chain is Cytoplasmic. Thr-459 is subject to Phosphothreonine. An interaction with KCNIP1 and KCNIP2 region spans residues 470–487 (SLIESQHHHLLHCLEKTT). The tract at residues 472–487 (IESQHHHLLHCLEKTT) is mediates dendritic targeting. The interval 523 to 565 (SSMQNYPSTRSPSLSSHSGLTTTCCSRRSKKTTHLPNSNLPAT) is disordered. Residues 529-548 (PSTRSPSLSSHSGLTTTCCS) show a composition bias toward low complexity. Ser-569 and Ser-585 each carry phosphoserine. The segment at 615 to 655 (ISIPTPPALTPEGESRPPPASPGPNTNIPSITSNVVKVSAL) is disordered. Residues 637-655 (GPNTNIPSITSNVVKVSAL) show a composition bias toward polar residues.

Belongs to the potassium channel family. D (Shal) (TC 1.A.1.2) subfamily. Kv4.3/KCND3 sub-subfamily. Homotetramer. Heterotetramer with KCND2. Associates with the regulatory subunit KCNIP3. Associates with the regulatory subunit KCNIP4. Interacts with KCNE1, KCNE2, SCN1B and KCNAB1 and DLG1. Component of heteromultimeric potassium channels. Identified in potassium channel complexes containing KCND1, KCND2, KCND3, KCNIP1, KCNIP2, KCNIP3, KCNIP4, DPP6 and DPP10. Interacts with KCNIP1; each KCNIP1 monomer interacts with two adjacent KCND3 subunits, through both the N-terminal inactivation ball of a KCND3 subunit and a C-terminal helix from the adjacent KCND3 subunit, clamping them together; this interaction stabilizes the tetrameric form and modulates the channel gating kinetics namely channel activation and inactivation kinetics and rate of recovery from inactivation. Interacts with DPP6; this interaction modulates the channel gating kinetics namely channel activation and inactivation kinetics and rate of recovery from inactivation. Interacts with KCNIP2; each KCNIP2 monomer interacts with two adjacent KCND3 subunits, through both the N-terminal inactivation ball of a KCND3 subunit and a C-terminal helix from the adjacent KCND3 subunit, clamping them together; this interaction modulates the channel gating kinetics. In terms of processing, regulated through phosphorylation at Ser-569 by CaMK2D.

It localises to the cell membrane. The protein localises to the sarcolemma. The protein resides in the cell projection. Its subcellular location is the dendrite. It catalyses the reaction K(+)(in) = K(+)(out). In terms of biological role, pore-forming (alpha) subunit of voltage-gated A-type potassium channels that mediates transmembrane potassium transport in excitable membranes, in brain and heart. In cardiomyocytes, may generate the transient outward potassium current I(To). In neurons, may conduct the transient subthreshold somatodendritic A-type potassium current (ISA). Kinetics properties are characterized by fast activation at subthreshold membrane potentials, rapid inactivation, and quick recovery from inactivation. Channel properties are modulated by interactions with regulatory subunits. Interaction with the regulatory subunits KCNIP1 or KCNIP2 modulates the channel gating kinetics namely channel activation and inactivation kinetics and rate of recovery from inactivation. Likewise, interaction with DPP6 modulates the channel gating kinetics namely channel activation and inactivation kinetics. This chain is A-type voltage-gated potassium channel KCND3, found in Mus musculus (Mouse).